Reading from the N-terminus, the 124-residue chain is ATP synthase epsilon chain (124 aa).

Residues 97–124 (ARVREASSEEEKSRAESELRAVKRSKEK) are disordered.

This sequence belongs to the ATPase epsilon chain family. F-type ATPases have 2 components, CF(1) - the catalytic core - and CF(0) - the membrane proton channel. CF(1) has five subunits: alpha(3), beta(3), gamma(1), delta(1), epsilon(1). CF(0) has three main subunits: a, b and c.

The protein resides in the cell membrane. Produces ATP from ADP in the presence of a proton gradient across the membrane. The chain is ATP synthase epsilon chain from Corynebacterium urealyticum (strain ATCC 43042 / DSM 7109).